Reading from the N-terminus, the 509-residue chain is Ribonuclease Y (509 aa).

Residues 3–23 (WILYVILPAVCIILGWTIRWL) form a helical membrane-spanning segment. In terms of domain architecture, KH spans 199-284 (TVSTVSLPSD…EIVQKVTREI (86 aa)). Residues 325 to 418 (VLQHSKEVAI…VQIADAISAA (94 aa)) enclose the HD domain.

It belongs to the RNase Y family.

Its subcellular location is the cell membrane. In terms of biological role, endoribonuclease that initiates mRNA decay. This is Ribonuclease Y from Treponema denticola (strain ATCC 35405 / DSM 14222 / CIP 103919 / JCM 8153 / KCTC 15104).